A 312-amino-acid polypeptide reads, in one-letter code: Phospholipid phosphatase 3 (312 aa).

At 1–33 the chain is on the cytoplasmic side; that stretch reads MQSYKYDKAIVPESKNGGSPALNNNPRKGGSKR. S19 carries the phosphoserine modification. A helical transmembrane segment spans residues 34–54; sequence VLLICLDLFCLFMAALPFLII. Over 55-85 the chain is Extracellular; that stretch reads ETSTIKPYRRGFYCNDESIKYPLKVSETIND. Residues 86 to 106 form a helical membrane-spanning segment; that stretch reads AVLCAVGIVIAILRIITGEFY. The Cytoplasmic segment spans residues 107–123; it reads RIYYLKEKSRSTIQNPY. The Dityrosine basolateral targeting motif signature appears at 109-110; sequence YY. Residues 124 to 144 traverse the membrane as a helical segment; sequence VAALYKQVGCFLFGCAISQSF. Residues 145-194 are Extracellular-facing; the sequence is TDIAKVSIGRLRPHFLSVCDPDFSQINCSEGYIQNYRCRGEDSKVQEARK. Residues 149–157 form a phosphatase sequence motif I region; it reads KVSIGRLRP. The N-linked (GlcNAc...) asparagine glycan is linked to N171. An Integrin-binding motif motif is present at residues 183–185; it reads RGE. A helical membrane pass occupies residues 195 to 215; it reads SFFSGHASFSMFTMLYLVLYL. Positions 197–200 are phosphatase sequence motif II; it reads FSGH. The Proton donors role is filled by H200. At 216–226 the chain is on the cytoplasmic side; the sequence is QARFTWRGARL. The chain crosses the membrane as a helical span at residues 227 to 244; sequence LRPLLQFTLLMMAFYTGL. The tract at residues 245-256 is phosphatase sequence motif III; that stretch reads SRVSDYKHHPSD. The Extracellular portion of the chain corresponds to 245–258; it reads SRVSDYKHHPSDVL. H252 serves as the catalytic Nucleophile. A helical membrane pass occupies residues 259 to 279; that stretch reads AGFAQGALVACCIVFFVSDLF. The segment at 276 to 312 is mediates interaction with CTNND1; the sequence is SDLFKTKTTLSLPAPAIRREILSPVDIMDRSNHHNMV. The Cytoplasmic portion of the chain corresponds to 280–312; the sequence is KTKTTLSLPAPAIRREILSPVDIMDRSNHHNMV.

This sequence belongs to the PA-phosphatase related phosphoesterase family. In terms of assembly, forms functional homodimers and homooligomers that are not required for substrate recognition and catalytic activity. Can also form heterooligomers with other PLPP2 and PLPP3. Interacts with CTNND1; negatively regulates the PLPP3-mediated stabilization of beta-catenin/CTNNB1. Post-translationally, N-glycosylated. Contains high-mannose oligosaccharides. Detected in epithelial cells of intestinal mucosa, lung, liver and brain.

It localises to the cell membrane. The protein resides in the basolateral cell membrane. It is found in the endoplasmic reticulum membrane. Its subcellular location is the endoplasmic reticulum-Golgi intermediate compartment membrane. The protein localises to the golgi apparatus membrane. It localises to the golgi apparatus. The protein resides in the trans-Golgi network membrane. It is found in the membrane raft. It carries out the reaction a 1,2-diacyl-sn-glycero-3-phosphate + H2O = a 1,2-diacyl-sn-glycerol + phosphate. It catalyses the reaction 1,2-dihexadecanoyl-sn-glycero-3-phosphate + H2O = 1,2-dihexadecanoyl-sn-glycerol + phosphate. The catalysed reaction is 1,2-di-(9Z-octadecenoyl)-sn-glycero-3-phosphate + H2O = 1,2-di-(9Z-octadecenoyl)-sn-glycerol + phosphate. The enzyme catalyses a monoacyl-sn-glycero-3-phosphate + H2O = a monoacylglycerol + phosphate. It carries out the reaction (9Z)-octadecenoyl-sn-glycero-3-phosphate + H2O = (9Z-octadecenoyl)-glycerol + phosphate. It catalyses the reaction sphing-4-enine 1-phosphate + H2O = sphing-4-enine + phosphate. The catalysed reaction is an N-acylsphing-4-enine 1-phosphate + H2O = an N-acylsphing-4-enine + phosphate. The enzyme catalyses N-(octanoyl)-sphing-4-enine-1-phosphate + H2O = N-octanoylsphing-4-enine + phosphate. It carries out the reaction N-(9Z-octadecenoyl)-ethanolamine phosphate + H2O = N-(9Z-octadecenoyl) ethanolamine + phosphate. It functions in the pathway lipid metabolism; phospholipid metabolism. Magnesium-independent phospholipid phosphatase. Insensitive to N-ethylmaleimide. Inhibited by sphingosine, zinc ions and modestly by propanolol. Functionally, magnesium-independent phospholipid phosphatase of the plasma membrane that catalyzes the dephosphorylation of a variety of glycerolipid and sphingolipid phosphate esters including phosphatidate/PA, lysophosphatidate/LPA, diacylglycerol pyrophosphate/DGPP, sphingosine 1-phosphate/S1P and ceramide 1-phosphate/C1P. Also acts on N-oleoyl ethanolamine phosphate/N-(9Z-octadecenoyl)-ethanolamine phosphate, a potential physiological compound. Has both an extracellular and an intracellular phosphatase activity, allowing the hydrolysis and the cellular uptake of these bioactive lipid mediators from the milieu, regulating signal transduction in different cellular processes. Through the dephosphorylation of extracellular sphingosine-1-phosphate and the regulation of its extra- and intracellular availability, plays a role in vascular homeostasis, regulating endothelial cell migration, adhesion, survival, proliferation and the production of pro-inflammatory cytokines. By maintaining the appropriate levels of this lipid in the cerebellum, also ensure its proper development and function. Through its intracellular lipid phosphatase activity may act in early compartments of the secretory pathway, regulating the formation of Golgi to endoplasmic reticulum retrograde transport carriers. Independently of this phosphatase activity may also function in the Wnt signaling pathway and the stabilization of beta-catenin/CTNNB1, thereby regulating cell proliferation, migration and differentiation in angiogenesis or yet in tumor growth. Also plays a role in integrin-mediated cell-cell adhesion in angiogenesis. In Rattus norvegicus (Rat), this protein is Phospholipid phosphatase 3.